The following is a 530-amino-acid chain: Glucose-6-phosphate isomerase (530 aa).

Glu322 (proton donor) is an active-site residue. Catalysis depends on residues His351 and Lys455.

The protein belongs to the GPI family.

It localises to the cytoplasm. The catalysed reaction is alpha-D-glucose 6-phosphate = beta-D-fructose 6-phosphate. Its pathway is carbohydrate biosynthesis; gluconeogenesis. It functions in the pathway carbohydrate degradation; glycolysis; D-glyceraldehyde 3-phosphate and glycerone phosphate from D-glucose: step 2/4. In terms of biological role, catalyzes the reversible isomerization of glucose-6-phosphate to fructose-6-phosphate. The polypeptide is Glucose-6-phosphate isomerase (Citrifermentans bemidjiense (strain ATCC BAA-1014 / DSM 16622 / JCM 12645 / Bem) (Geobacter bemidjiensis)).